We begin with the raw amino-acid sequence, 398 residues long: S-adenosylmethionine synthase (398 aa).

Residue histidine 16 participates in ATP binding. Mg(2+) is bound at residue aspartate 18. Glutamate 44 is a binding site for K(+). Residues glutamate 57 and glutamine 100 each coordinate L-methionine. Residues 100-110 (QSPDIAQGVNE) form a flexible loop region. Residues 175 to 177 (DAK), 242 to 243 (RF), aspartate 251, 257 to 258 (RK), alanine 274, and lysine 278 contribute to the ATP site. An L-methionine-binding site is contributed by aspartate 251. An L-methionine-binding site is contributed by lysine 282.

The protein belongs to the AdoMet synthase family. As to quaternary structure, homotetramer; dimer of dimers. Mg(2+) serves as cofactor. The cofactor is K(+).

It localises to the cytoplasm. The catalysed reaction is L-methionine + ATP + H2O = S-adenosyl-L-methionine + phosphate + diphosphate. It participates in amino-acid biosynthesis; S-adenosyl-L-methionine biosynthesis; S-adenosyl-L-methionine from L-methionine: step 1/1. Functionally, catalyzes the formation of S-adenosylmethionine (AdoMet) from methionine and ATP. The overall synthetic reaction is composed of two sequential steps, AdoMet formation and the subsequent tripolyphosphate hydrolysis which occurs prior to release of AdoMet from the enzyme. In Streptococcus agalactiae serotype Ia (strain ATCC 27591 / A909 / CDC SS700), this protein is S-adenosylmethionine synthase.